Consider the following 349-residue polypeptide: Selenide, water dikinase (349 aa).

The active site involves selenocysteine 19. A non-standard amino acid (selenocysteine) is located at residue selenocysteine 19. Residues lysine 22 and 50–52 (LGD) contribute to the ATP site. Aspartate 53 is a binding site for Mg(2+). ATP contacts are provided by residues aspartate 69, aspartate 92, and 140–142 (GHT). Aspartate 92 lines the Mg(2+) pocket. A Mg(2+)-binding site is contributed by aspartate 246.

This sequence belongs to the selenophosphate synthase 1 family. Class I subfamily. Homodimer. It depends on Mg(2+) as a cofactor.

It carries out the reaction hydrogenselenide + ATP + H2O = selenophosphate + AMP + phosphate + 2 H(+). Synthesizes selenophosphate from selenide and ATP. The polypeptide is Selenide, water dikinase (Methanocaldococcus jannaschii (strain ATCC 43067 / DSM 2661 / JAL-1 / JCM 10045 / NBRC 100440) (Methanococcus jannaschii)).